The sequence spans 302 residues: Melibiose operon regulatory protein (302 aa).

Positions 194–292 constitute an HTH araC/xylS-type domain; the sequence is SQMLGFIAEN…GMSPQQYRKL (99 aa). DNA-binding regions (H-T-H motif) lie at residues 211 to 232 and 259 to 282; these read NDVAEHVKLNANYAMGIFQRVM and ILDIALTAGFRSSSRFYSTFGKYV.

In terms of biological role, transcription activator for the expression of the melAB operon. MelR binds at two sites located upstream of the melAB transcription site. In Escherichia coli O6:H1 (strain CFT073 / ATCC 700928 / UPEC), this protein is Melibiose operon regulatory protein (melR).